We begin with the raw amino-acid sequence, 31 residues long: Cytochrome b6-f complex subunit 6 (31 aa).

The chain crosses the membrane as a helical span at residues 3–23; that stretch reads LFIGYIIFLVAFFGLATGLFL.

Belongs to the PetL family. As to quaternary structure, the 4 large subunits of the cytochrome b6-f complex are cytochrome b6, subunit IV (17 kDa polypeptide, PetD), cytochrome f and the Rieske protein, while the 4 small subunits are PetG, PetL, PetM and PetN. The complex functions as a dimer.

Its subcellular location is the plastid. The protein resides in the chloroplast thylakoid membrane. In terms of biological role, component of the cytochrome b6-f complex, which mediates electron transfer between photosystem II (PSII) and photosystem I (PSI), cyclic electron flow around PSI, and state transitions. PetL is important for photoautotrophic growth as well as for electron transfer efficiency and stability of the cytochrome b6-f complex. This Porphyra purpurea (Red seaweed) protein is Cytochrome b6-f complex subunit 6.